The chain runs to 562 residues: MEKVWLKRYPADVPAEIDPDRYSSLIEMFENAALRYADQPAFINMGEVMTFRKLEERSRAFAAYLQQGLGLQKGDRVALMMPNLLQYPIALFGVLRAGMIVVNVNPLYTPRELEHQLSDSGAVAIVIVSNFAHTLEKVVFKTQVRHVILTRMGDQLSAAKGTLVNFVVKYIKRLVPKYYLPDAISFRTVLQKGRRMQYVKPDVINTDTAFLQYTGGTTGVAKGAILTHRNMQSNLEQAKAAYAPLLQPGRDLVVTALPLYHIFALTVNCLLFIELGGRSLLITNPRDIPGMVKELSRYPFTAITGVNTLFNALLNNEEFTHLDFSTLRLSVGGGMPVQKAVAEKWETLTGKHLLEGYGLTECSPLVTGNPYDLKHYSGSIGLPVPSTDVRLRDDDGNDVELGKPGELWVRGPQVMLGYWQRPDATDDVLKDGWLATGDIATMDEDGFLRIVDRKKDMILVSGFNVYPNEIEEVVALHAKVLESAVIGVPNEVSGEAVKVFVVKNDASLTPEELLTHCRRYLTGYKVPKIVEFRDELPKSNVGKILRRELRDEEVKVGTTDAA.

An ATP-binding site is contributed by 213–224 (YTGGTTGVAKGA).

It belongs to the ATP-dependent AMP-binding enzyme family. Mg(2+) is required as a cofactor.

The protein resides in the membrane. The catalysed reaction is a long-chain fatty acid + ATP + CoA = a long-chain fatty acyl-CoA + AMP + diphosphate. It functions in the pathway lipid metabolism; fatty acid beta-oxidation. Catalyzes the esterification, concomitant with transport, of exogenous long-chain fatty acids into metabolically active CoA thioesters for subsequent degradation or incorporation into phospholipids. This Yersinia pestis protein is Long-chain-fatty-acid--CoA ligase (fadD).